The chain runs to 611 residues: Protein spaetzle 3 (611 aa).

The N-terminal stretch at 1–14 (MALTNFSLPFGALG) is a signal peptide. Asparagine 5 carries an N-linked (GlcNAc...) asparagine glycan. Residues 57–322 (EYFKNNPYAP…NDKSNNNQMP (266 aa)) are disordered. 3 stretches are compositionally biased toward low complexity: residues 104 to 120 (QQVQ…QHQQ), 127 to 153 (SVSF…LTQT), and 169 to 185 (PGQQ…QQKQ). Over residues 191 to 210 (GSASATFTKNSGSFSITSFG) the composition is skewed to polar residues. A compositionally biased stretch (pro residues) spans 218–239 (PPQPQQPPPSQQQQPPPAPPPQ). Residues 288–306 (YDVEEGEEDEEEDGEEEGQ) show a composition bias toward acidic residues. Asparagine 335 and asparagine 351 each carry an N-linked (GlcNAc...) asparagine glycan. The segment at 477-518 (KKRQAAAGGSRNRGGSAGGSGNGNTNANRQPGNKNGSSGTGR) is disordered. The segment covering 487 to 498 (RNRGGSAGGSGN) has biased composition (gly residues). The N-linked (GlcNAc...) asparagine glycan is linked to asparagine 511. The 89-residue stretch at 521–609 (ACESKIEIVT…LFPSCCVCRC (89 aa)) folds into the Spaetzle domain. 3 disulfide bridges follow: cysteine 522/cysteine 573, cysteine 559/cysteine 605, and cysteine 567/cysteine 607.

As to quaternary structure, homodimer; disulfide-linked.

Neurotrophin which may function as a ligand to the Toll-related receptor Tollo. Involved in a Tollo and JNK signaling pathway that positively regulates neuromuscular junction (NMJ) growth in presynaptic motorneurons. May function by activating Tollo to promote the phosphorylation of JNK. This is Protein spaetzle 3 from Drosophila melanogaster (Fruit fly).